The following is a 207-amino-acid chain: Outer-membrane lipoprotein LolB (207 aa).

Residues methionine 1–alanine 21 form the signal peptide. A lipid anchor (N-palmitoyl cysteine) is attached at cysteine 22. Residue cysteine 22 is the site of S-diacylglycerol cysteine attachment.

It belongs to the LolB family. Monomer.

The protein localises to the cell outer membrane. In terms of biological role, plays a critical role in the incorporation of lipoproteins in the outer membrane after they are released by the LolA protein. The sequence is that of Outer-membrane lipoprotein LolB from Salmonella arizonae (strain ATCC BAA-731 / CDC346-86 / RSK2980).